The primary structure comprises 247 residues: Ribonuclease 3 (247 aa).

The RNase III domain maps to Leu21 to Gly149. Glu62 contributes to the Mg(2+) binding site. Asp66 is a catalytic residue. Residues Asn135 and Glu138 each coordinate Mg(2+). Glu138 is an active-site residue. In terms of domain architecture, DRBM spans Asp176–Lys245.

This sequence belongs to the ribonuclease III family. In terms of assembly, homodimer. It depends on Mg(2+) as a cofactor.

It localises to the cytoplasm. It catalyses the reaction Endonucleolytic cleavage to 5'-phosphomonoester.. In terms of biological role, digests double-stranded RNA. Involved in the processing of primary rRNA transcript to yield the immediate precursors to the large and small rRNAs (23S and 16S). Processes some mRNAs, and tRNAs when they are encoded in the rRNA operon. Processes pre-crRNA and tracrRNA of type II CRISPR loci if present in the organism. In Leptospira interrogans serogroup Icterohaemorrhagiae serovar copenhageni (strain Fiocruz L1-130), this protein is Ribonuclease 3.